A 164-amino-acid polypeptide reads, in one-letter code: Microfibrillar-associated protein 5 (164 aa).

The N-terminal stretch at 1-28 (MLFLGQKALLLVLAISIPSDWLPLGVSG) is a signal peptide. The Cell attachment site motif lies at 30-32 (RGD). Residue N70 is glycosylated (N-linked (GlcNAc...) asparagine).

This sequence belongs to the MFAP family. As to quaternary structure, interacts with TGFB2. Interacts with BMP2. Interacts with FBN1 (via N-terminal domain) and FBN2. In terms of processing, forms intermolecular disulfide bonds either with other MAGP-2 molecules or with other components of the microfibrils.

Its subcellular location is the secreted. It localises to the extracellular space. The protein localises to the extracellular matrix. Functionally, may play a role in hematopoiesis. In the cardiovascular system, could regulate growth factors or participate in cell signaling in maintaining large vessel integrity. Component of the elastin-associated microfibrils. The polypeptide is Microfibrillar-associated protein 5 (Mfap5) (Mus musculus (Mouse)).